A 310-amino-acid polypeptide reads, in one-letter code: Carbamate kinase 1 (310 aa).

It belongs to the carbamate kinase family.

It is found in the cytoplasm. It carries out the reaction hydrogencarbonate + NH4(+) + ATP = carbamoyl phosphate + ADP + H2O + H(+). It functions in the pathway metabolic intermediate metabolism; carbamoyl phosphate degradation; CO(2) and NH(3) from carbamoyl phosphate: step 1/1. This is Carbamate kinase 1 (arcC1) from Staphylococcus aureus (strain MRSA252).